The primary structure comprises 366 residues: Di-N-acetylchitobiase (366 aa).

Residues 1 to 22 (MALCGLPEFTLLLLPLLARLSA) form the signal peptide. The GH18 domain occupies 23-366 (GDCPCSEAAL…EMWGALKPRL (344 aa)). Glutamate 127 serves as the catalytic Proton donor. N-linked (GlcNAc...) asparagine glycans are attached at residues asparagine 131, asparagine 177, asparagine 212, asparagine 246, and asparagine 283.

The protein belongs to the glycosyl hydrolase 18 family.

Its subcellular location is the lysosome. Functionally, involved in the degradation of asparagine-linked glycoproteins. Hydrolyze of N-acetyl-beta-D-glucosamine (1-4)N-acetylglucosamine chitobiose core from the reducing end of the bond, it requires prior cleavage by glycosylasparaginase. The chain is Di-N-acetylchitobiase (Ctbs) from Mus musculus (Mouse).